Consider the following 259-residue polypeptide: Hydroxyacylglutathione hydrolase (259 aa).

The Zn(2+) site is built by H56, H58, D60, H61, H112, D133, and H171.

The protein belongs to the metallo-beta-lactamase superfamily. Glyoxalase II family. Monomer. The cofactor is Zn(2+).

The catalysed reaction is an S-(2-hydroxyacyl)glutathione + H2O = a 2-hydroxy carboxylate + glutathione + H(+). The protein operates within secondary metabolite metabolism; methylglyoxal degradation; (R)-lactate from methylglyoxal: step 2/2. Its function is as follows. Thiolesterase that catalyzes the hydrolysis of S-D-lactoyl-glutathione to form glutathione and D-lactic acid. The protein is Hydroxyacylglutathione hydrolase of Pseudomonas putida (strain W619).